The primary structure comprises 36 residues: Avenin-A (36 aa).

Belongs to the gliadin/glutenin family. Monomer.

The protein localises to the vacuole. It is found in the aleurone grain. In terms of biological role, seed storage protein. Serves as a source of nitrogen, carbon, and sulfur for the young developing seedling. This chain is Avenin-A, found in Avena sativa (Oat).